We begin with the raw amino-acid sequence, 75 residues long: uncharacterized protein (75 aa).

This is an uncharacterized protein from Saccharomyces cerevisiae (strain ATCC 204508 / S288c) (Baker's yeast).